Here is a 280-residue protein sequence, read N- to C-terminus: Acetylglutamate kinase (280 aa).

Substrate-binding positions include G64–G65, R86, and N179.

This sequence belongs to the acetylglutamate kinase family. ArgB subfamily.

It localises to the cytoplasm. The enzyme catalyses N-acetyl-L-glutamate + ATP = N-acetyl-L-glutamyl 5-phosphate + ADP. It participates in amino-acid biosynthesis; L-arginine biosynthesis; N(2)-acetyl-L-ornithine from L-glutamate: step 2/4. Functionally, catalyzes the ATP-dependent phosphorylation of N-acetyl-L-glutamate. The protein is Acetylglutamate kinase of Campylobacter fetus subsp. fetus (strain 82-40).